A 557-amino-acid chain; its full sequence is NADP-dependent malic enzyme (557 aa).

Catalysis depends on Y88, which acts as the Proton donor. Position 141 (R141) interacts with NADP(+). K159 acts as the Proton acceptor in catalysis. Positions 231, 232, and 255 each coordinate a divalent metal cation. D255 provides a ligand contact to NADP(+). S322 bears the Phosphoserine mark. Residue N394 participates in NADP(+) binding.

Belongs to the malic enzymes family. In terms of assembly, homotetramer. It depends on Mg(2+) as a cofactor. Mn(2+) is required as a cofactor.

The protein localises to the cytoplasm. It carries out the reaction (S)-malate + NADP(+) = pyruvate + CO2 + NADPH. The enzyme catalyses oxaloacetate + H(+) = pyruvate + CO2. Catalyzes the oxidative decarboxylation of (S)-malate in the presence of NADP(+) and divalent metal ions, and decarboxylation of oxaloacetate. This is NADP-dependent malic enzyme (ME1) from Sus scrofa (Pig).